A 227-amino-acid chain; its full sequence is Ribose-5-phosphate isomerase A (227 aa).

Residues 26–29 (TGST), 82–85 (DGAD), and 95–98 (KGGG) each bind substrate. The Proton acceptor role is filled by Glu-104. Lys-122 is a binding site for substrate.

Belongs to the ribose 5-phosphate isomerase family. As to quaternary structure, homodimer.

It catalyses the reaction aldehydo-D-ribose 5-phosphate = D-ribulose 5-phosphate. It participates in carbohydrate degradation; pentose phosphate pathway; D-ribose 5-phosphate from D-ribulose 5-phosphate (non-oxidative stage): step 1/1. Catalyzes the reversible conversion of ribose-5-phosphate to ribulose 5-phosphate. This Streptococcus pyogenes serotype M2 (strain MGAS10270) protein is Ribose-5-phosphate isomerase A.